A 517-amino-acid polypeptide reads, in one-letter code: MDVDEGQDMSQVSGKESPPVSDTPDEGDEPMPVPEDLSTTSGAQQNSKSDRGMGSNVKVETQSDEENGRACEMNGEECAEDLRMLDASGEKMNGSHRDQGSSALSGVGGIRLPNGKLKCDICGIVCIGPNVLMVHKRSHTERPFQCNQCGASFTQKGNLLRHIKLHSGEKPFKCHLCNYACRRRDALTGHLRTHSVGKPHKCGYCGRSYKQRSSLEEHKERCHNYLESMGLPGVCPVIKEETNHNEMAEDLCKIGAERSLVLDRLASNVAKRKSSMPQKFLGDKCLSDMPYDSANYEKEDMMTSHVMDQAINNAINYLGAESLRPLVQTPPGSSEVVPVISSMYQLHKPPSDGPPRSNHSAQDAVDNLLLLSKAKSVSSEREASPSNSCQDSTDTESNAEEQRSGLIYLTNHINPHARNGLALKEEQRAYEVLRAASENSQDAFRVVSTSGEQLKVYKCEHCRVLFLDHVMYTIHMGCHGCHGFRDPFECNMCGYHSQDRYEFSSHITRGEHRYHLS.

The interval 1–71 is disordered; sequence MDVDEGQDMS…QSDEENGRAC (71 aa). Residue S13 is modified to Phosphoserine. Position 23 is a phosphothreonine (T23). Over residues 37 to 47 the composition is skewed to polar residues; it reads LSTTSGAQQNS. Residue K58 forms a Glycyl lysine isopeptide (Lys-Gly) (interchain with G-Cter in SUMO) linkage. Phosphoserine is present on residues S63 and S101. The segment at 117 to 139 adopts a C2H2-type 1 zinc-finger fold; sequence LKCDICGIVCIGPNVLMVHKRSH. T140 bears the Phosphothreonine mark. The C2H2-type 2 zinc-finger motif lies at 144 to 166; the sequence is FQCNQCGASFTQKGNLLRHIKLH. The required for both high-affinity DNA binding and pericentromeric heterochromatin localization stretch occupies residues 153 to 162; that stretch reads FTQKGNLLRH. S167 bears the Phosphoserine mark. A C2H2-type 3 zinc finger spans residues 172 to 194; sequence FKCHLCNYACRRRDALTGHLRTH. The required for both high-affinity DNA binding and pericentromeric heterochromatin localization stretch occupies residues 179–194; the sequence is YACRRRDALTGHLRTH. S195 carries the phosphoserine modification. The C2H2-type 4 zinc finger occupies 200-223; that stretch reads HKCGYCGRSYKQRSSLEEHKERCH. Residue K239 forms a Glycyl lysine isopeptide (Lys-Gly) (interchain with G-Cter in SUMO) linkage. S259, S287, S293, S357, S360, S384, S386, S388, and S392 each carry phosphoserine. The tract at residues 376-400 is disordered; the sequence is SVSSEREASPSNSCQDSTDTESNAE. Residue T393 is modified to Phosphothreonine. 2 positions are modified to phosphoserine: S397 and S440. C2H2-type zinc fingers lie at residues 457-479 and 488-512; these read YKCE…MGCH and FECN…RGEH. Positions 463-466 are required for binding PP1CC; that stretch reads RVLF.

This sequence belongs to the Ikaros C2H2-type zinc-finger protein family. In terms of assembly, heterodimer with other IKAROS family members. Interacts with IKZF4 and IKZF5. Component of the chromatin-remodeling NuRD repressor complex which includes at least HDAC1, HDAC2, RBBP4, RBBP7, IKZF1, MTA2, MBD2, MBD3, MTA1L1, CHD3 and CHD4. Interacts directly with the CHD4 component of the NuRD complex. Interacts directly with SMARCA4; the interaction associates IKFZ1 with the BAF complex. Interacts with SUMO1; the interaction sumoylates IKAROS, promoted by PIAS2 and PIAS3. Interacts with PIAS2 (isoform alpha); the interaction promotes sumoylation and reduces transcription repression. Interacts, to a lesser extent, with PIAS3. Interacts with PPP1CC; the interaction targets PPP1CC to pericentromeric heterochromatin, dephosphorylates IKAROS, stabilizes it and prevents it from degradation. Interacts with IKZF3. Phosphorylation at Ser-357 and Ser-360 downstream of SYK induces nuclear translocation. Phosphorylation controls cell-cycle progression from late G(1) stage to S stage. Hyperphosphorylated during G2/M phase. Dephosphorylated state during late G(1) phase. Phosphorylation on Thr-140 is required for DNA and pericentromeric location during mitosis. CK2 is the main kinase, in vitro. GSK3 and CDK may also contribute to phosphorylation of the C-terminal serine and threonine residues. Phosphorylation on these C-terminal residues reduces the DNA-binding ability. Phosphorylation/dephosphorylation events on Ser-13 and Ser-293 regulate TDT expression during thymocyte differentiation. Dephosphorylation by protein phosphatase 1 regulates stability and pericentromeric heterochromatin location. Phosphorylated in both lymphoid and non-lymphoid tissues. Post-translationally, sumoylated. Simultaneous sumoylation on the 2 sites results in a loss of both HDAC-dependent and HDAC-independent repression. Has no effect on pericentromeric heterochromatin location. Desumoylated by SENP1. In terms of processing, polyubiquitinated. Strongly expressed in T-cells and their progenitors,in B-cells, and in all early embryonic retinal progenitor cells (RPCs). Isoforms V and VI are the predominant isoforms in lymphocytes.

The protein localises to the nucleus. The protein resides in the cytoplasm. Functionally, transcription regulator of hematopoietic cell differentiation. Binds gamma-satellite DNA. Binds with higher affinity to gamma satellite A. Plays a role in the development of lymphocytes, B- and T-cells. Binds and activates the enhancer (delta-A element) of the CD3-delta gene. Repressor of the TDT (terminal deoxynucleotidyltransferase) gene during thymocyte differentiation. Regulates transcription through association with both HDAC-dependent and HDAC-independent complexes. Targets the 2 chromatin-remodeling complexes, NuRD and BAF (SWI/SNF), in a single complex (PYR complex), to the beta-globin locus in adult erythrocytes. Increases normal apoptosis in adult erythroid cells. Confers early temporal competence to retinal progenitor cells (RPCs). Function is isoform-specific and is modulated by dominant-negative inactive isoforms. The chain is DNA-binding protein Ikaros (Ikzf1) from Mus musculus (Mouse).